The following is a 430-amino-acid chain: Tol-Pal system protein TolB (430 aa).

A signal peptide spans 1–21 (MKQALRVAFGFLMLWAAVLHA).

This sequence belongs to the TolB family. The Tol-Pal system is composed of five core proteins: the inner membrane proteins TolA, TolQ and TolR, the periplasmic protein TolB and the outer membrane protein Pal. They form a network linking the inner and outer membranes and the peptidoglycan layer.

It localises to the periplasm. Part of the Tol-Pal system, which plays a role in outer membrane invagination during cell division and is important for maintaining outer membrane integrity. TolB occupies a key intermediary position in the Tol-Pal system because it communicates directly with both membrane-embedded components, Pal in the outer membrane and TolA in the inner membrane. The sequence is that of Tol-Pal system protein TolB from Salmonella typhi.